The primary structure comprises 317 residues: Aspartate carbamoyltransferase catalytic subunit (317 aa).

Residues arginine 65 and threonine 66 each coordinate carbamoyl phosphate. Lysine 93 serves as a coordination point for L-aspartate. Positions 115, 145, and 148 each coordinate carbamoyl phosphate. 2 residues coordinate L-aspartate: arginine 178 and arginine 233. Residues glycine 274 and proline 275 each coordinate carbamoyl phosphate.

Belongs to the aspartate/ornithine carbamoyltransferase superfamily. ATCase family. As to quaternary structure, heterododecamer (2C3:3R2) of six catalytic PyrB chains organized as two trimers (C3), and six regulatory PyrI chains organized as three dimers (R2).

It catalyses the reaction carbamoyl phosphate + L-aspartate = N-carbamoyl-L-aspartate + phosphate + H(+). It participates in pyrimidine metabolism; UMP biosynthesis via de novo pathway; (S)-dihydroorotate from bicarbonate: step 2/3. In terms of biological role, catalyzes the condensation of carbamoyl phosphate and aspartate to form carbamoyl aspartate and inorganic phosphate, the committed step in the de novo pyrimidine nucleotide biosynthesis pathway. This Bordetella parapertussis (strain 12822 / ATCC BAA-587 / NCTC 13253) protein is Aspartate carbamoyltransferase catalytic subunit.